Here is a 374-residue protein sequence, read N- to C-terminus: Alanine racemase (374 aa).

Lys-35 (proton acceptor; specific for D-alanine) is an active-site residue. Lys-35 bears the N6-(pyridoxal phosphate)lysine mark. Arg-133 lines the substrate pocket. Tyr-261 (proton acceptor; specific for L-alanine) is an active-site residue. Met-315 is a binding site for substrate.

Belongs to the alanine racemase family. It depends on pyridoxal 5'-phosphate as a cofactor.

It carries out the reaction L-alanine = D-alanine. Its pathway is amino-acid biosynthesis; D-alanine biosynthesis; D-alanine from L-alanine: step 1/1. Functionally, catalyzes the interconversion of L-alanine and D-alanine. May also act on other amino acids. In Psychrobacter sp. (strain PRwf-1), this protein is Alanine racemase (alr).